The primary structure comprises 211 residues: Ribosomal RNA small subunit methyltransferase G (211 aa).

Residues G73, I126–E127, and R142 each bind S-adenosyl-L-methionine.

The protein belongs to the methyltransferase superfamily. RNA methyltransferase RsmG family.

The protein localises to the cytoplasm. It catalyses the reaction guanosine(527) in 16S rRNA + S-adenosyl-L-methionine = N(7)-methylguanosine(527) in 16S rRNA + S-adenosyl-L-homocysteine. Specifically methylates the N7 position of guanine in position 527 of 16S rRNA. The sequence is that of Ribosomal RNA small subunit methyltransferase G from Methylorubrum populi (strain ATCC BAA-705 / NCIMB 13946 / BJ001) (Methylobacterium populi).